A 129-amino-acid chain; its full sequence is Small ribosomal subunit protein uS11 (129 aa).

Belongs to the universal ribosomal protein uS11 family. In terms of assembly, part of the 30S ribosomal subunit. Interacts with proteins S7 and S18. Binds to IF-3.

Functionally, located on the platform of the 30S subunit, it bridges several disparate RNA helices of the 16S rRNA. Forms part of the Shine-Dalgarno cleft in the 70S ribosome. The polypeptide is Small ribosomal subunit protein uS11 (Dechloromonas aromatica (strain RCB)).